We begin with the raw amino-acid sequence, 342 residues long: tRNA N6-adenosine threonylcarbamoyltransferase (342 aa).

2 residues coordinate Fe cation: H111 and H115. Residues 134-138 (LVSGG), D167, G180, and N275 contribute to the substrate site. Position 303 (D303) interacts with Fe cation.

It belongs to the KAE1 / TsaD family. Requires Fe(2+) as cofactor.

The protein resides in the cytoplasm. The catalysed reaction is L-threonylcarbamoyladenylate + adenosine(37) in tRNA = N(6)-L-threonylcarbamoyladenosine(37) in tRNA + AMP + H(+). Functionally, required for the formation of a threonylcarbamoyl group on adenosine at position 37 (t(6)A37) in tRNAs that read codons beginning with adenine. Is involved in the transfer of the threonylcarbamoyl moiety of threonylcarbamoyl-AMP (TC-AMP) to the N6 group of A37, together with TsaE and TsaB. TsaD likely plays a direct catalytic role in this reaction. This is tRNA N6-adenosine threonylcarbamoyltransferase from Paraburkholderia xenovorans (strain LB400).